The chain runs to 719 residues: Disintegrin and metalloproteinase domain-containing protein 18 (719 aa).

Residues 1-19 form the signal peptide; that stretch reads MPLLFILAELAMLFARLDS. A propeptide spanning residues 20 to 179 is cleaved from the precursor; it reads EGICLHITVP…QDKNHSQLLP (160 aa). N-linked (GlcNAc...) asparagine glycans are attached at residues asparagine 61, asparagine 75, asparagine 121, asparagine 152, asparagine 173, asparagine 244, and asparagine 331. Topologically, residues 173–683 are extracellular; that stretch reads NHSQLLPQSL…TKRLSKNEDS (511 aa). The Peptidase M12B domain occupies 180-378; that stretch reads QSLKLHIIVG…FDTQCLGDLS (199 aa). 3 disulfides stabilise this stretch: cysteine 289-cysteine 373, cysteine 332-cysteine 357, and cysteine 334-cysteine 339. Asparagine 356 and asparagine 405 each carry an N-linked (GlcNAc...) asparagine glycan. Positions 387–476 constitute a Disintegrin domain; that stretch reads QAVCGNGIME…HCVPDTFALN (90 aa). Residues cysteine 447 and cysteine 468 are joined by a disulfide bond. Residues asparagine 607, asparagine 614, and asparagine 621 are each glycosylated (N-linked (GlcNAc...) asparagine). The 35-residue stretch at 616–650 folds into the EGF-like domain; sequence TGNDCNATKKCKGNGICNNFGNCQCFPDYRPPDCN. 3 cysteine pairs are disulfide-bonded: cysteine 620–cysteine 632, cysteine 626–cysteine 638, and cysteine 640–cysteine 649. The helical transmembrane segment at 684 to 704 threads the bilayer; the sequence is WVILGFFIFLPFIVTFLVGIM. Residues 705 to 719 are Cytoplasmic-facing; it reads KRNERKIVPQGEHKI.

The prodomain and the metalloprotease-like domain are cleaved during the epididymal maturation of the spermatozoa. In terms of tissue distribution, expressed specifically in testis.

The protein resides in the membrane. Functionally, sperm surface membrane protein that may be involved in spermatogenesis and fertilization. This is a non catalytic metalloprotease-like protein. This Mus musculus (Mouse) protein is Disintegrin and metalloproteinase domain-containing protein 18 (Adam18).